Consider the following 519-residue polypeptide: Membrane-bound glycerophospholipid O-acyltransferase 2 (519 aa).

Helical transmembrane passes span 22–42, 61–81, 88–108, 184–204, 236–256, and 263–283; these read PIDQ…AVWF, TLLG…HFLV, CIMI…FALG, FMGI…FIEG, LLVC…LPVE, and FQAT…LLAA. Catalysis depends on residues Asn-341 and His-372. 3 consecutive transmembrane segments (helical) span residues 365–385, 415–435, and 443–463; these read FFLS…FLTG, LITW…FVLL, and FYSS…LLLP. The segment at 497–519 is disordered; that stretch reads FSTMNNVCNQNRDTGSRHSSLTQ.

This sequence belongs to the membrane-bound acyltransferase family. In terms of tissue distribution, highly expressed in epididymis, brain, testis, and ovary.

The protein resides in the endoplasmic reticulum membrane. It carries out the reaction a 1-acyl-sn-glycero-3-phosphocholine + an acyl-CoA = a 1,2-diacyl-sn-glycero-3-phosphocholine + CoA. It catalyses the reaction a 1-acyl-sn-glycero-3-phosphoethanolamine + an acyl-CoA = a 1,2-diacyl-sn-glycero-3-phosphoethanolamine + CoA. The enzyme catalyses a 1-O-(1Z-alkenyl)-sn-glycero-3-phosphocholine + (9Z)-octadecenoyl-CoA = 1-O-(1Z)-alkenyl-2-(9Z)-octadecenoyl-sn-glycero-3-phosphocholine + CoA. The catalysed reaction is a 1-O-(1Z-alkenyl)-sn-glycero-3-phosphoethanolamine + (9Z)-octadecenoyl-CoA = 1-O-(1Z)-alkenyl-2-(9Z)-octadecenoyl-sn-glycero-3-phosphoethanolamine + CoA. It carries out the reaction 1-octadecanoyl-sn-glycero-3-phosphoethanolamine + (9Z)-octadecenoyl-CoA = 1-octadecanoyl-2-(9Z-octadecenoyl)-sn-glycero-3-phosphoethanolamine + CoA. It catalyses the reaction 1-octadecanoyl-sn-glycero-3-phosphocholine + (9Z)-octadecenoyl-CoA = 1-octadecanoyl-2-(9Z-octadecenoyl)-sn-glycero-3-phosphocholine + CoA. The enzyme catalyses 1-(9Z-octadecenoyl)-sn-glycero-3-phosphoethanolamine + (9Z)-octadecenoyl-CoA = 1,2-di-(9Z-octadecenoyl)-sn-glycero-3-phosphoethanolamine + CoA. The catalysed reaction is 1-hexadecanoyl-sn-glycero-3-phosphoethanolamine + (9Z)-octadecenoyl-CoA = 1-hexadecanoyl-2-(9Z-octadecenoyl)-sn-glycero-3-phosphoethanolamine + CoA. It carries out the reaction 1-hexadecanoyl-sn-glycero-3-phosphocholine + (9Z)-octadecenoyl-CoA = 1-hexadecanoyl-2-(9Z-octadecenoyl)-sn-glycero-3-phosphocholine + CoA. It catalyses the reaction (9Z)-hexadecenoyl-CoA + 1-hexadecanoyl-sn-glycero-3-phosphocholine = 1-hexadecanoyl-2-(9Z-hexadecenoyl)-sn-glycero-3-phosphocholine + CoA. The enzyme catalyses 1-hexadecanoyl-sn-glycero-3-phosphoethanolamine + (9Z)-hexadecenoyl-CoA = 1-hexadecanoyl-2-(9Z)-hexadecenoyl-sn-glycero-3-phosphoethanolamine + CoA. The catalysed reaction is (9Z,12Z)-octadecadienoyl-CoA + 1-hexadecanoyl-sn-glycero-3-phosphocholine = 1-hexadecanoyl-2-(9Z,12Z-octadecadienoyl)-sn-glycero-3-phosphocholine + CoA. It participates in lipid metabolism; phospholipid metabolism. Its activity is regulated as follows. Partially inhibited by thimerosal. Its function is as follows. Acyltransferase which catalyzes the transfer of an acyl group from an acyl-CoA to a lysophospholipid leading to the production of a phospholipid and participates in the reacylation step of the phospholipid remodeling pathway also known as the Lands cycle. Catalyzes the acylation of lysophosphatidylcholine (1-acyl-sn-glycero-3-phosphocholine or LPC) and to a lesser extend lysophosphatidylethanolamine (1-acyl-sn-glycero-3-phosphoethanolamine or LPE). Does not acylates lysophosphatidic acid (LPA) and lysophosphatidylserine. Prefers oleoyl-CoA as the acyl donor. May be involved in chondrocyte differentiation. The protein is Membrane-bound glycerophospholipid O-acyltransferase 2 of Mus musculus (Mouse).